Reading from the N-terminus, the 476-residue chain is ATAGPASGKIRAVIGAVVDVQFEQGELPAILNALTIDQGNNQKLVLEVAQHLGENAVRAIAMDGTEGLVRGQTVVDTGAPISVPVGRGTLGRIINVVGEPIDERGPIECKQRNPIHADPPSFVEQSTEAEVLETGIKVVDLLAPYARGGKIGLFGGAGVGKTVFIQELINNIAKAHGGFSVFTGVGERTREGNDLYREMKETGVINLEGESKVALVFGQMNEPPGARARVALTGLTIAEYFRDEEGQDVLLFVDNIFRFTQAGSEVSALLGRIPSAVGYQPTLATDMGLLQERITTTRKGSVTSVQAVYVPADDLTDPAPATTFAHLDATTVLSRGISELGIYPAVDPLDSKSRLLDVSVVGQEHYDVATGVQQTLQAYKSLQDIIAILGMDELSEQDKLTVERARKIQRFLSQPFAVAEVFTGIEGKLVRLKDTIASFKAVLEGKYDHLPENAFYMVGGIEDVVAKAEKIAAEAN.

156 to 163 (GAGVGKTV) contacts ATP.

In terms of assembly, F-type ATP synthases have 2 components, the catalytic core F(1) and the membrane-embedded component F(0), linked together by a central stalk and a peripheral stalk. The central stalk, also called rotor shaft, is often seen as part of F(1). The peripheral stalk is seen as part of F(0). F(0) contains the membrane channel next to the rotor. F-type ATP synthases form dimers but each monomer functions independently in ATP generation. The dimer consists of 18 different polypeptides: ATP1 (subunit alpha, part of F(1), 3 molecules per monomer), ATP2 (subunit beta, part of F(1), 3 molecules per monomer), ATP3 (subunit gamma, part of the central stalk), ATP4 (subunit b, part of the peripheral stalk), ATP5/OSCP (subunit 5/OSCP, part of the peripheral stalk), ATP6 (subunit a, part of the peripheral stalk), ATP7 (subunit d, part of the peripheral stalk), ATP8 (subunit 8, part of the peripheral stalk), OLI1 (subunit c, part of the rotor, 10 molecules per monomer), ATP14 (subunit h, part of the peripheral stalk), ATP15 (subunit epsilon, part of the central stalk), ATP16 (subunit delta, part of the central stalk), ATP17 (subunit f, part of the peripheral stalk), ATP18 (subunit i/j, part of the peripheral stalk). Dimer-specific subunits are ATP19 (subunit k, at interface between monomers), ATP20 (subunit g, at interface between monomers), TIM11 (subunit e, at interface between monomers). Also contains subunit L.

Its subcellular location is the mitochondrion inner membrane. It catalyses the reaction ATP + H2O + 4 H(+)(in) = ADP + phosphate + 5 H(+)(out). In terms of biological role, mitochondrial membrane ATP synthase (F(1)F(0) ATP synthase or Complex V) produces ATP from ADP in the presence of a proton gradient across the membrane which is generated by electron transport complexes of the respiratory chain. F-type ATP synthases consist of two structural domains, F(1) - containing the extramembraneous catalytic core, and F(0) - containing the membrane proton channel, linked together by a central stalk and a peripheral stalk. During catalysis, ATP synthesis in the catalytic domain of F(1) is coupled via a rotary mechanism of the central stalk subunits to proton translocation. Subunits alpha/ATP1 and beta/ATP2 form the catalytic core in F(1). Rotation of the central stalk against the surrounding alpha/ATP1(3)beta/ATP2(3) subunits leads to hydrolysis of ATP in three separate catalytic sites on the beta/ATP2 subunits. The sequence is that of ATP synthase subunit beta, mitochondrial from Pichia angusta (Yeast).